A 160-amino-acid chain; its full sequence is ATP synthase subunit b (160 aa).

The chain crosses the membrane as a helical span at residues 5–27 (IEQILTQIIAFLIMLGVLKKFVW).

This sequence belongs to the ATPase B chain family. In terms of assembly, F-type ATPases have 2 components, F(1) - the catalytic core - and F(0) - the membrane proton channel. F(1) has five subunits: alpha(3), beta(3), gamma(1), delta(1), epsilon(1). F(0) has three main subunits: a(1), b(2) and c(10-14). The alpha and beta chains form an alternating ring which encloses part of the gamma chain. F(1) is attached to F(0) by a central stalk formed by the gamma and epsilon chains, while a peripheral stalk is formed by the delta and b chains.

It localises to the cell inner membrane. In terms of biological role, f(1)F(0) ATP synthase produces ATP from ADP in the presence of a proton or sodium gradient. F-type ATPases consist of two structural domains, F(1) containing the extramembraneous catalytic core and F(0) containing the membrane proton channel, linked together by a central stalk and a peripheral stalk. During catalysis, ATP synthesis in the catalytic domain of F(1) is coupled via a rotary mechanism of the central stalk subunits to proton translocation. Functionally, component of the F(0) channel, it forms part of the peripheral stalk, linking F(1) to F(0). In Protochlamydia amoebophila (strain UWE25), this protein is ATP synthase subunit b.